The primary structure comprises 452 residues: Bifunctional protein GlmU (452 aa).

The pyrophosphorylase stretch occupies residues 1–232 (MTSRTSLTIV…EDEVRGINTK (232 aa)). Residues 11-14 (LAAG), Lys25, Gln78, and 83-84 (GT) contribute to the UDP-N-acetyl-alpha-D-glucosamine site. Asp108 provides a ligand contact to Mg(2+). UDP-N-acetyl-alpha-D-glucosamine-binding residues include Gly144, Glu158, Asn173, and Asn230. A Mg(2+)-binding site is contributed by Asn230. The interval 233 to 253 (AQLAEAEAVMQARLRQAALDA) is linker. The interval 254–452 (GVTMIAPETV…KTRGKTRPAK (199 aa)) is N-acetyltransferase. Residues Arg319 and Lys337 each contribute to the UDP-N-acetyl-alpha-D-glucosamine site. Residue His349 is the Proton acceptor of the active site. The UDP-N-acetyl-alpha-D-glucosamine site is built by Tyr352 and Asn363. Residues Ala366, 372 to 373 (NY), Ser391, Ser409, and Arg426 each bind acetyl-CoA.

In the N-terminal section; belongs to the N-acetylglucosamine-1-phosphate uridyltransferase family. The protein in the C-terminal section; belongs to the transferase hexapeptide repeat family. Homotrimer. It depends on Mg(2+) as a cofactor.

The protein resides in the cytoplasm. It carries out the reaction alpha-D-glucosamine 1-phosphate + acetyl-CoA = N-acetyl-alpha-D-glucosamine 1-phosphate + CoA + H(+). It catalyses the reaction N-acetyl-alpha-D-glucosamine 1-phosphate + UTP + H(+) = UDP-N-acetyl-alpha-D-glucosamine + diphosphate. It participates in nucleotide-sugar biosynthesis; UDP-N-acetyl-alpha-D-glucosamine biosynthesis; N-acetyl-alpha-D-glucosamine 1-phosphate from alpha-D-glucosamine 6-phosphate (route II): step 2/2. Its pathway is nucleotide-sugar biosynthesis; UDP-N-acetyl-alpha-D-glucosamine biosynthesis; UDP-N-acetyl-alpha-D-glucosamine from N-acetyl-alpha-D-glucosamine 1-phosphate: step 1/1. The protein operates within bacterial outer membrane biogenesis; LPS lipid A biosynthesis. Its function is as follows. Catalyzes the last two sequential reactions in the de novo biosynthetic pathway for UDP-N-acetylglucosamine (UDP-GlcNAc). The C-terminal domain catalyzes the transfer of acetyl group from acetyl coenzyme A to glucosamine-1-phosphate (GlcN-1-P) to produce N-acetylglucosamine-1-phosphate (GlcNAc-1-P), which is converted into UDP-GlcNAc by the transfer of uridine 5-monophosphate (from uridine 5-triphosphate), a reaction catalyzed by the N-terminal domain. This chain is Bifunctional protein GlmU, found in Rhodopseudomonas palustris (strain BisA53).